A 110-amino-acid chain; its full sequence is NADH-quinone oxidoreductase subunit K (110 aa).

3 helical membrane-spanning segments follow: residues 13–33 (LNHY…GLFM), 41–61 (ILMS…AFSV), and 73–93 (IIIL…LLIY).

This sequence belongs to the complex I subunit 4L family. NDH-1 is composed of 14 different subunits. Subunits NuoA, H, J, K, L, M, N constitute the membrane sector of the complex.

The protein resides in the cell inner membrane. It carries out the reaction a quinone + NADH + 5 H(+)(in) = a quinol + NAD(+) + 4 H(+)(out). Functionally, NDH-1 shuttles electrons from NADH, via FMN and iron-sulfur (Fe-S) centers, to quinones in the respiratory chain. The immediate electron acceptor for the enzyme in this species is believed to be ubiquinone. Couples the redox reaction to proton translocation (for every two electrons transferred, four hydrogen ions are translocated across the cytoplasmic membrane), and thus conserves the redox energy in a proton gradient. In Rickettsia typhi (strain ATCC VR-144 / Wilmington), this protein is NADH-quinone oxidoreductase subunit K.